Here is a 955-residue protein sequence, read N- to C-terminus: 2-oxoglutarate dehydrogenase E1 component (955 aa).

Belongs to the alpha-ketoglutarate dehydrogenase family. Homodimer. Part of the 2-oxoglutarate dehydrogenase (OGDH) complex composed of E1 (2-oxoglutarate dehydrogenase), E2 (dihydrolipoamide succinyltransferase) and E3 (dihydrolipoamide dehydrogenase); the complex contains multiple copies of the three enzymatic components (E1, E2 and E3). Thiamine diphosphate is required as a cofactor.

The catalysed reaction is N(6)-[(R)-lipoyl]-L-lysyl-[protein] + 2-oxoglutarate + H(+) = N(6)-[(R)-S(8)-succinyldihydrolipoyl]-L-lysyl-[protein] + CO2. Its function is as follows. E1 component of the 2-oxoglutarate dehydrogenase (OGDH) complex which catalyzes the decarboxylation of 2-oxoglutarate, the first step in the conversion of 2-oxoglutarate to succinyl-CoA and CO(2). This Bacillus mycoides (strain KBAB4) (Bacillus weihenstephanensis) protein is 2-oxoglutarate dehydrogenase E1 component.